Here is a 337-residue protein sequence, read N- to C-terminus: Anthranilate phosphoribosyltransferase (337 aa).

5-phospho-alpha-D-ribose 1-diphosphate-binding positions include G81, 84 to 85, S89, 91 to 94, 109 to 117, and A121; these read GD, NVST, and KHGNRAMSS. Residue G81 coordinates anthranilate. S93 lines the Mg(2+) pocket. N112 lines the anthranilate pocket. Position 167 (R167) interacts with anthranilate. Mg(2+) is bound by residues D226 and E227.

Belongs to the anthranilate phosphoribosyltransferase family. As to quaternary structure, homodimer. It depends on Mg(2+) as a cofactor.

The catalysed reaction is N-(5-phospho-beta-D-ribosyl)anthranilate + diphosphate = 5-phospho-alpha-D-ribose 1-diphosphate + anthranilate. Its pathway is amino-acid biosynthesis; L-tryptophan biosynthesis; L-tryptophan from chorismate: step 2/5. In terms of biological role, catalyzes the transfer of the phosphoribosyl group of 5-phosphorylribose-1-pyrophosphate (PRPP) to anthranilate to yield N-(5'-phosphoribosyl)-anthranilate (PRA). In Afipia carboxidovorans (strain ATCC 49405 / DSM 1227 / KCTC 32145 / OM5) (Oligotropha carboxidovorans), this protein is Anthranilate phosphoribosyltransferase.